We begin with the raw amino-acid sequence, 186 residues long: Ribosome-recycling factor (186 aa).

The protein belongs to the RRF family.

Its subcellular location is the cytoplasm. Its function is as follows. Responsible for the release of ribosomes from messenger RNA at the termination of protein biosynthesis. May increase the efficiency of translation by recycling ribosomes from one round of translation to another. The protein is Ribosome-recycling factor of Burkholderia thailandensis (strain ATCC 700388 / DSM 13276 / CCUG 48851 / CIP 106301 / E264).